The primary structure comprises 135 residues: Large ribosomal subunit protein uL16c (135 aa).

It belongs to the universal ribosomal protein uL16 family. As to quaternary structure, part of the 50S ribosomal subunit.

It localises to the plastid. Its subcellular location is the chloroplast. This Lepidium virginicum (Virginia pepperweed) protein is Large ribosomal subunit protein uL16c.